The following is a 172-amino-acid chain: ATP synthase subunit b (172 aa).

Residues 12-32 traverse the membrane as a helical segment; the sequence is VGFNAGTMLFQLVAMLILLAL.

It belongs to the ATPase B chain family. F-type ATPases have 2 components, F(1) - the catalytic core - and F(0) - the membrane proton channel. F(1) has five subunits: alpha(3), beta(3), gamma(1), delta(1), epsilon(1). F(0) has three main subunits: a(1), b(2) and c(10-14). The alpha and beta chains form an alternating ring which encloses part of the gamma chain. F(1) is attached to F(0) by a central stalk formed by the gamma and epsilon chains, while a peripheral stalk is formed by the delta and b chains.

The protein localises to the cell membrane. Functionally, f(1)F(0) ATP synthase produces ATP from ADP in the presence of a proton or sodium gradient. F-type ATPases consist of two structural domains, F(1) containing the extramembraneous catalytic core and F(0) containing the membrane proton channel, linked together by a central stalk and a peripheral stalk. During catalysis, ATP synthesis in the catalytic domain of F(1) is coupled via a rotary mechanism of the central stalk subunits to proton translocation. Its function is as follows. Component of the F(0) channel, it forms part of the peripheral stalk, linking F(1) to F(0). This Bacillus licheniformis (strain ATCC 14580 / DSM 13 / JCM 2505 / CCUG 7422 / NBRC 12200 / NCIMB 9375 / NCTC 10341 / NRRL NRS-1264 / Gibson 46) protein is ATP synthase subunit b.